The sequence spans 140 residues: Protein SamA (140 aa).

Residues Ser-61 and Lys-98 each act as for autocatalytic cleavage activity in the active site.

The protein belongs to the peptidase S24 family.

Involved in UV protection and mutation. In Salmonella typhimurium (strain LT2 / SGSC1412 / ATCC 700720), this protein is Protein SamA (samA).